The following is a 93-amino-acid chain: Small ribosomal subunit protein uS19 (93 aa).

Residues 73 to 93 (EFSPTRTFRGHVKDDRKSKRR) are disordered. A compositionally biased stretch (basic and acidic residues) spans 83–93 (HVKDDRKSKRR).

Belongs to the universal ribosomal protein uS19 family.

Functionally, protein S19 forms a complex with S13 that binds strongly to the 16S ribosomal RNA. The sequence is that of Small ribosomal subunit protein uS19 from Streptomyces avermitilis (strain ATCC 31267 / DSM 46492 / JCM 5070 / NBRC 14893 / NCIMB 12804 / NRRL 8165 / MA-4680).